A 209-amino-acid chain; its full sequence is Casparian strip membrane protein 1 (209 aa).

At methionine 1–glycine 46 the chain is on the cytoplasmic side. Residues isoleucine 47–valine 67 traverse the membrane as a helical segment. The Extracellular portion of the chain corresponds to alanine 68 to threonine 96. The chain crosses the membrane as a helical span at residues phenylalanine 97–isoleucine 117. Over valine 118–arginine 129 the chain is Cytoplasmic. Residues leucine 130–serine 150 form a helical membrane-spanning segment. Topologically, residues alanine 151 to arginine 179 are extracellular. The helical transmembrane segment at valine 180–leucine 200 threads the bilayer. The Cytoplasmic portion of the chain corresponds to serine 201–histidine 209.

This sequence belongs to the Casparian strip membrane proteins (CASP) family. In terms of assembly, homodimer and heterodimers.

The protein resides in the cell membrane. Its function is as follows. Regulates membrane-cell wall junctions and localized cell wall deposition. Required for establishment of the Casparian strip membrane domain (CSD) and the subsequent formation of Casparian strips, a cell wall modification of the root endodermis that determines an apoplastic barrier between the intraorganismal apoplasm and the extraorganismal apoplasm and prevents lateral diffusion. The polypeptide is Casparian strip membrane protein 1 (Nicotiana tabacum (Common tobacco)).